Here is a 228-residue protein sequence, read N- to C-terminus: Cytidylate kinase (228 aa).

Gly17 to Thr25 lines the ATP pocket.

Belongs to the cytidylate kinase family. Type 1 subfamily.

Its subcellular location is the cytoplasm. The enzyme catalyses CMP + ATP = CDP + ADP. The catalysed reaction is dCMP + ATP = dCDP + ADP. This Burkholderia ambifaria (strain ATCC BAA-244 / DSM 16087 / CCUG 44356 / LMG 19182 / AMMD) (Burkholderia cepacia (strain AMMD)) protein is Cytidylate kinase.